Here is a 216-residue protein sequence, read N- to C-terminus: Ras-like protein (216 aa).

16 to 23 contacts GTP; the sequence is GGGGVGKS. The Effector region motif lies at 38–46; that stretch reads YDPTIEDSY. GTP contacts are provided by residues 63–67 and 122–125; these read DTAGQ and NKCD. S-palmitoyl cysteine attachment occurs at residues cysteine 209 and cysteine 210. Residue cysteine 213 is modified to Cysteine methyl ester. Cysteine 213 carries the S-geranylgeranyl cysteine lipid modification. The propeptide at 214-216 is removed in mature form; the sequence is VVL.

The protein belongs to the small GTPase superfamily. Ras family.

It is found in the cell membrane. The catalysed reaction is GTP + H2O = GDP + phosphate + H(+). With respect to regulation, alternates between an inactive form bound to GDP and an active form bound to GTP. Activated by a guanine nucleotide-exchange factor (GEF) and inactivated by a GTPase-activating protein (GAP). This Cryptococcus neoformans var. neoformans serotype D (strain B-3501A) (Filobasidiella neoformans) protein is Ras-like protein (RAS1).